The primary structure comprises 253 residues: Chemokine-binding protein (253 aa).

An N-terminal signal peptide occupies residues 1 to 17 (MKQYIVLACMCLAAAAM). A disordered region spans residues 62-87 (TEITESESDPEVESEDDSTSVEDVDP). The span at 65-86 (TESESDPEVESEDDSTSVEDVD) shows a compositional bias: acidic residues.

It belongs to the orthopoxvirus OPG001 family. In terms of assembly, binds to host CC chemokines, such as RANTES/CCL5, MIP-1alpha/CCL3, MCP-1/CCL2 and eotaxin.

Its subcellular location is the secreted. In terms of biological role, inhibits host immune defense by binding to host chemokines. Binds host CC chemokines (beta chemokines) such as RANTES with high affinity, but not CXC or C chemokines (alpha and gamma chemokines). The chain is Chemokine-binding protein (OPG001) from Variola virus (isolate Human/India/Ind3/1967) (VARV).